The following is a 66-amino-acid chain: Large ribosomal subunit protein bL31 (66 aa).

The Zn(2+) site is built by cysteine 16, cysteine 18, cysteine 36, and cysteine 39.

Belongs to the bacterial ribosomal protein bL31 family. Type A subfamily. Part of the 50S ribosomal subunit. It depends on Zn(2+) as a cofactor.

Binds the 23S rRNA. This Geobacillus kaustophilus (strain HTA426) protein is Large ribosomal subunit protein bL31.